Consider the following 205-residue polypeptide: Probable GTP-binding protein EngB (205 aa).

In terms of domain architecture, EngB-type G spans 29-203; the sequence is QGAEIAFIGR…KAVLSQWFSS (175 aa). GTP contacts are provided by residues 37 to 44, 64 to 68, 82 to 85, 149 to 152, and 182 to 184; these read GRSNAGKS, GRTQM, DLPG, TKSD, and FSS. Serine 44 and threonine 66 together coordinate Mg(2+).

This sequence belongs to the TRAFAC class TrmE-Era-EngA-EngB-Septin-like GTPase superfamily. EngB GTPase family. Requires Mg(2+) as cofactor.

Functionally, necessary for normal cell division and for the maintenance of normal septation. This Coxiella burnetii (strain CbuK_Q154) (Coxiella burnetii (strain Q154)) protein is Probable GTP-binding protein EngB.